A 296-amino-acid chain; its full sequence is tRNA dimethylallyltransferase (296 aa).

19 to 26 (GPTASGKS) is a binding site for ATP. 21-26 (TASGKS) lines the substrate pocket.

This sequence belongs to the IPP transferase family. Monomer. Mg(2+) is required as a cofactor.

It catalyses the reaction adenosine(37) in tRNA + dimethylallyl diphosphate = N(6)-dimethylallyladenosine(37) in tRNA + diphosphate. In terms of biological role, catalyzes the transfer of a dimethylallyl group onto the adenine at position 37 in tRNAs that read codons beginning with uridine, leading to the formation of N6-(dimethylallyl)adenosine (i(6)A). In Dinoroseobacter shibae (strain DSM 16493 / NCIMB 14021 / DFL 12), this protein is tRNA dimethylallyltransferase.